We begin with the raw amino-acid sequence, 78 residues long: Antimicrobial peptide marcin-18 (78 aa).

Positions 1-23 (MQFKKQLMVIFLAYFLVVNESEA) are cleaved as a signal peptide. Arginine amide is present on Arg-41. A propeptide spanning residues 42–78 (RKNQRSRSIMKRDLENLFDPYQRNLELDRLLKQLPNY) is cleaved from the precursor.

It belongs to the non-disulfide-bridged peptide (NDBP) superfamily. Medium-length antimicrobial peptide (group 3) family. As to expression, expressed by the venom gland.

It is found in the secreted. The protein resides in the target cell membrane. Its function is as follows. Antimicrobial peptide with potent activity against bacteria. Acts by fastly disrupting the bacterial membrane. Shows activity against Gram-positive bacteria S.aureus (MIC=1.5-2.9 uM) and S.epidermidis (MIC=2.9 uM), M.luteus (MIC=23.4 uM), B.thuringiensis (MIC=2.9 uM), B.subtilis (MIC=2.9 uM) and Gram-negative bacteria E.coli (MIC=5.9-11.7 uM) and P.aeruginosa (MIC=5.9 uM), as well as against penicillin (MIC=2.9 uM) and methicillin (MIC=1.5-2.9 uM) resistant bacteria. Antibiotic activity is not affected by major negatively charged components of the prokaryotic cell wall (e.g. lipopolysaccharides and lipoteichoic acid). In vivo, in a mouse model of lethal peritonitis, shows potent antibiotic activity without cytotoxicity, improving the survival rate. The protein is Antimicrobial peptide marcin-18 of Olivierus martensii (Manchurian scorpion).